A 282-amino-acid polypeptide reads, in one-letter code: MSKLLSYTARIILRNSRITVRQLVRGFAGFVSGQRNAPQPAYGRPVPGLLRQKMVSSIGKRSMFIQTQDTPNPDSLKFLPGVEVLGKGNTYDFPSGTAAHCSPLAKLLFRVEGVRAVFFGSDFITISKEESAEWSLIKPEVFAVIMDFFASGLPILHEARPNADTEILDDDDETVMMIKELLDTRIRPTVQEDGGDIVFISYENGVVKLKMQGSCSSCPSSIVTLKNGVQNMLQFYIPEVESVEQVFDDADRMADKEFERFEKNLKQKEPAGAPVGIGGGPN.

The transit peptide at 1-27 directs the protein to the mitochondrion; the sequence is MSKLLSYTARIILRNSRITVRQLVRGF. Residues 178–246 are nifU; that stretch reads IKELLDTRIR…IPEVESVEQV (69 aa). Cys215 and Cys218 together coordinate [4Fe-4S] cluster. A disordered region spans residues 263-282; the sequence is KNLKQKEPAGAPVGIGGGPN.

The protein belongs to the NifU family.

It localises to the mitochondrion. Functionally, molecular scaffold for [Fe-S] cluster assembly of mitochondrial iron-sulfur proteins. The sequence is that of NFU1 iron-sulfur cluster scaffold homolog, mitochondrial from Drosophila persimilis (Fruit fly).